We begin with the raw amino-acid sequence, 299 residues long: Plasmodesmata-located protein 5 (299 aa).

The signal sequence occupies residues 1-25; it reads MIKTKTTSLLCFLLTAVILMNPSSS. The Extracellular portion of the chain corresponds to 26 to 264; sequence SPTDNYIYAV…NKDDNGVGKT (239 aa). 2 Gnk2-homologous domains span residues 29-135 and 137-237; these read DNYI…NKSF and GVQD…VGGS. Intrachain disulfides connect Cys36–Cys113, Cys89–Cys98, Cys101–Cys126, Cys148–Cys215, Cys191–Cys200, and Cys203–Cys228. Residues 265–285 form a helical membrane-spanning segment; it reads LAIIIGIVTLIILLVVFLAFV. Residues 265–285 form a necessary and sufficient for plasmodesmal targeting region; it reads LAIIIGIVTLIILLVVFLAFV. Over 286-299 the chain is Cytoplasmic; sequence GKCCRKLQDEKWCK.

This sequence belongs to the cysteine-rich repeat secretory protein family. Plasmodesmata-located proteins (PDLD) subfamily. In terms of assembly, monomer. Interacts with PDLP1. (Microbial infection) Interacts with Grapevine fanleaf virus (GFLV) 2B-MP. As to expression, highly expressed in inflorescence nodes and rosette senescent leaves. Mostly expressed in cell wall junctions between leaf epidermal and mesophyl cells, and to a lesser extent at the cross walls between epidermal or cortex cells within the hypocotyl (at protein level). Low vascular expression in seedling and mature leaf, but high expression in senescing leaves (at protein level).

Its subcellular location is the cell membrane. It localises to the cell junction. The protein resides in the plasmodesma. In terms of biological role, modulates cell-to-cell trafficking. Has a positive role in innate immunity. Required for systemic acquired resistance (SAR) which is mediated by the signaling molecules azelaic acid (AzA), glycerol-3-phosphate (G3P), and salicylic acid (SA). Negative regulator of plasmodesmata permeability triggered by SA during immune responses, through regulation of callose deposition. Delays the trafficking of Tobacco Mosaic Virus (TMV) movement protein (MP). Required for symplastic signal transport. In Arabidopsis thaliana (Mouse-ear cress), this protein is Plasmodesmata-located protein 5.